Here is a 148-residue protein sequence, read N- to C-terminus: Cystatin-C (148 aa).

The N-terminal stretch at 1–28 (MARSLGVPLLLLAALVVALALAVSPAAG) is a signal peptide. The Secondary area of contact motif lies at 83 to 87 (QIVSG). Cystine bridges form between C101-C111 and C125-C145.

It belongs to the cystatin family.

The protein resides in the secreted. In terms of biological role, this is a thiol proteinase inhibitor. This chain is Cystatin-C (CST3), found in Oryctolagus cuniculus (Rabbit).